The following is a 119-amino-acid chain: Large ribosomal subunit protein uL18 (119 aa).

This sequence belongs to the universal ribosomal protein uL18 family. As to quaternary structure, part of the 50S ribosomal subunit; part of the 5S rRNA/L5/L18/L25 subcomplex. Contacts the 5S and 23S rRNAs.

In terms of biological role, this is one of the proteins that bind and probably mediate the attachment of the 5S RNA into the large ribosomal subunit, where it forms part of the central protuberance. The sequence is that of Large ribosomal subunit protein uL18 from Solibacter usitatus (strain Ellin6076).